A 144-amino-acid polypeptide reads, in one-letter code: Large ribosomal subunit protein uL16 (144 aa).

The segment covering 1–17 (MLQPKKTKFRRQQKGRA) has biased composition (basic residues). The segment at 1–22 (MLQPKKTKFRRQQKGRAKGNAQ) is disordered.

Belongs to the universal ribosomal protein uL16 family. Part of the 50S ribosomal subunit.

Functionally, binds 23S rRNA and is also seen to make contacts with the A and possibly P site tRNAs. The sequence is that of Large ribosomal subunit protein uL16 from Bacteroides thetaiotaomicron (strain ATCC 29148 / DSM 2079 / JCM 5827 / CCUG 10774 / NCTC 10582 / VPI-5482 / E50).